The sequence spans 28 residues: Aryl acylamidase (28 aa).

Homodimer.

It carries out the reaction an anilide + H2O = aniline + a carboxylate + H(+). The protein is Aryl acylamidase of Nocardia globerula.